We begin with the raw amino-acid sequence, 157 residues long: uncharacterized protein (157 aa).

Positions 33 to 134 (NLKHFLDVAR…MYRADKLSRL (102 aa)) constitute an HD domain.

This is an uncharacterized protein from Clostridium beijerinckii (strain ATCC 51743 / NCIMB 8052) (Clostridium acetobutylicum).